The following is a 459-amino-acid chain: Putrescine aminotransferase (459 aa).

Pyridoxal 5'-phosphate-binding positions include 150-151 and glutamine 274; that span reads GT. Lysine 300 bears the N6-(pyridoxal phosphate)lysine mark. Threonine 332 is a pyridoxal 5'-phosphate binding site.

The protein belongs to the class-III pyridoxal-phosphate-dependent aminotransferase family. Putrescine aminotransferase subfamily. Pyridoxal 5'-phosphate is required as a cofactor.

It catalyses the reaction an alkane-alpha,omega-diamine + 2-oxoglutarate = an omega-aminoaldehyde + L-glutamate. It carries out the reaction putrescine + 2-oxoglutarate = 1-pyrroline + L-glutamate + H2O. The enzyme catalyses cadaverine + 2-oxoglutarate = 5-aminopentanal + L-glutamate. It functions in the pathway amine and polyamine degradation; putrescine degradation; 4-aminobutanal from putrescine (transaminase route): step 1/1. Catalyzes the aminotransferase reaction from putrescine to 2-oxoglutarate, leading to glutamate and 4-aminobutanal, which spontaneously cyclizes to form 1-pyrroline. This is the first step in one of two pathways for putrescine degradation, where putrescine is converted into 4-aminobutanoate (gamma-aminobutyrate or GABA) via 4-aminobutanal. Also functions as a cadaverine transaminase in a a L-lysine degradation pathway to succinate that proceeds via cadaverine, glutarate and L-2-hydroxyglutarate. This chain is Putrescine aminotransferase, found in Salmonella paratyphi A (strain ATCC 9150 / SARB42).